Here is a 156-residue protein sequence, read N- to C-terminus: Regulatory protein RecX (156 aa).

It belongs to the RecX family.

The protein resides in the cytoplasm. Modulates RecA activity. In Pseudomonas putida (strain ATCC 700007 / DSM 6899 / JCM 31910 / BCRC 17059 / LMG 24140 / F1), this protein is Regulatory protein RecX.